The primary structure comprises 68 residues: Erythrodihydroneopterin triphosphate synthetase (68 aa).

At S66 the chain carries Phosphoserine.

This chain is Erythrodihydroneopterin triphosphate synthetase, found in Cavia porcellus (Guinea pig).